The primary structure comprises 401 residues: MDKQHSKQRIVVGLSGGVDSAVTAYLLKQQGHEVIGIFMKNWEDDDDSEYCSSNIDFVDAAAVADVIGIEIEHVNFAADYKDRVFAEFLREYQAGRTPNPDILCNAEIKFKAFLDHAMRLGAEKIATGHYARVRRNESTGLHELLKGLDPAKDQSYFLHRLNQAQLSKTLFPVGELHKTEVRRIADEIGLPNAKKKDSTGICFIGERPFRDFLNRYIAKAPGPIKNDRGRVLGKHVGLSFYTLGQRQGLGIGGVKARGAELKAAQARGQRGVGEHEPWFVARKDLDTNTLWVVQGHDHPWLQSTVLSAQDCSWVAGTAPAAGLMAAKTRYRQVDATCELRSATTANCELVFAEPQWAVTPGQSAVLYQGDVCLGGGVIAASNVPNTLPTVSTRSTPELLVK.

Residues 13–20 and methionine 39 contribute to the ATP site; that span reads GLSGGVDS. Residues 99–101 form an interaction with target base in tRNA region; that stretch reads NPD. Catalysis depends on cysteine 104, which acts as the Nucleophile. Cysteine 104 and cysteine 202 form a disulfide bridge. Glycine 128 provides a ligand contact to ATP. The interval 152 to 154 is interaction with tRNA; sequence KDQ. Cysteine 202 (cysteine persulfide intermediate) is an active-site residue. The tract at residues 329-330 is interaction with tRNA; that stretch reads RY.

The protein belongs to the MnmA/TRMU family.

It is found in the cytoplasm. It carries out the reaction S-sulfanyl-L-cysteinyl-[protein] + uridine(34) in tRNA + AH2 + ATP = 2-thiouridine(34) in tRNA + L-cysteinyl-[protein] + A + AMP + diphosphate + H(+). Catalyzes the 2-thiolation of uridine at the wobble position (U34) of tRNA, leading to the formation of s(2)U34. This Polaromonas sp. (strain JS666 / ATCC BAA-500) protein is tRNA-specific 2-thiouridylase MnmA.